Here is a 159-residue protein sequence, read N- to C-terminus: Cytochrome c-type biogenesis protein CcmE (159 aa).

At 1 to 8 the chain is on the cytoplasmic side; the sequence is MNPRRKKR. A helical; Signal-anchor for type II membrane protein membrane pass occupies residues 9–29; sequence LLVIVAVLFGIGASIGLVLYA. Residues 30-159 are Periplasmic-facing; sequence LQENINLFYT…KPKYNLDSGN (130 aa). Residues His-130 and Tyr-134 each contribute to the heme site.

Belongs to the CcmE/CycJ family.

Its subcellular location is the cell inner membrane. In terms of biological role, heme chaperone required for the biogenesis of c-type cytochromes. Transiently binds heme delivered by CcmC and transfers the heme to apo-cytochromes in a process facilitated by CcmF and CcmH. This is Cytochrome c-type biogenesis protein CcmE from Pseudoalteromonas translucida (strain TAC 125).